We begin with the raw amino-acid sequence, 134 residues long: Phosphoribosyl-AMP cyclohydrolase (134 aa).

Residue Asp80 participates in Mg(2+) binding. Cys81 provides a ligand contact to Zn(2+). Positions 82 and 84 each coordinate Mg(2+). Zn(2+) is bound by residues Cys98 and Cys105.

Belongs to the PRA-CH family. Homodimer. Requires Mg(2+) as cofactor. The cofactor is Zn(2+).

The protein resides in the cytoplasm. It catalyses the reaction 1-(5-phospho-beta-D-ribosyl)-5'-AMP + H2O = 1-(5-phospho-beta-D-ribosyl)-5-[(5-phospho-beta-D-ribosylamino)methylideneamino]imidazole-4-carboxamide. Its pathway is amino-acid biosynthesis; L-histidine biosynthesis; L-histidine from 5-phospho-alpha-D-ribose 1-diphosphate: step 3/9. Catalyzes the hydrolysis of the adenine ring of phosphoribosyl-AMP. The protein is Phosphoribosyl-AMP cyclohydrolase of Bordetella bronchiseptica (strain ATCC BAA-588 / NCTC 13252 / RB50) (Alcaligenes bronchisepticus).